The sequence spans 485 residues: Otoconin-90 (485 aa).

Residues 1-17 (MIMLLMVGMLMAPCVGA) form the signal peptide. A glycan (N-linked (GlcNAc...) asparagine) is linked at N37. Residues 75–189 (LLQFVNSMRC…SLNFLDASFC (115 aa)) form a phospholipase A2-like 1 region. Intrachain disulfides connect C84–C144, C98–C189, C100–C116, C115–C171, C122–C164, C131–C157, and C151–C162. 2 N-linked (GlcNAc...) asparagine glycosylation sites follow: N178 and N288. 2 phospholipase A2-like regions span residues 315–371 (MLQL…QVGC) and 383–435 (CEDH…PVSC). N-linked (GlcNAc...) asparagine glycosylation occurs at N417. The tract at residues 444–485 (LASSVDSSSEENSEEAPPQMERLRRFLEKPPGPLGARPLGGK) is disordered.

This sequence belongs to the phospholipase A2 family. Interacts with OTOL1. In terms of tissue distribution, in the embryo, highly expressed in the developing otocyst with weak expression in the brain. Also expressed in nonsensory epithelia of both the vestibular and cochlear portions of the developing inner ear. Not expressed in adult or embryonic macular sensory epithelia.

It is found in the secreted. Its function is as follows. Major protein of the otoconia, a calcium carbonate structure in the saccule and utricle of the ear. Together with OTOL1, acts as a scaffold for otoconia biomineralization: sequesters calcium and forms interconnecting fibrils between otoconia that are incorporated into the calcium crystal structure. Together with OTOL1, modulates calcite crystal morphology and growth kinetics. It is unlikely that this protein has phospholipase A2 activity. This Mus musculus (Mouse) protein is Otoconin-90.